Reading from the N-terminus, the 219-residue chain is Uracil phosphoribosyltransferase 1 (219 aa).

GTP contacts are provided by residues Arg-33, Arg-42, and 76–79 (DGRI). Arg-86 lines the 5-phospho-alpha-D-ribose 1-diphosphate pocket. Residue Arg-103 participates in GTP binding. Arg-111 is a binding site for 5-phospho-alpha-D-ribose 1-diphosphate. Arg-132 lines the GTP pocket. 5-phospho-alpha-D-ribose 1-diphosphate contacts are provided by residues Asp-138 and 138–146 (DPMLATGGS). Residue Tyr-202 participates in D-ribose 5-phosphate binding. Uracil is bound by residues Ile-203 and 208–210 (GDF). A 5-phospho-alpha-D-ribose 1-diphosphate-binding site is contributed by Asp-209.

The protein belongs to the UPRTase family. Requires Mg(2+) as cofactor.

The enzyme catalyses UMP + diphosphate = 5-phospho-alpha-D-ribose 1-diphosphate + uracil. It participates in pyrimidine metabolism; UMP biosynthesis via salvage pathway; UMP from uracil: step 1/1. Allosterically activated by GTP. Catalyzes the conversion of uracil and 5-phospho-alpha-D-ribose 1-diphosphate (PRPP) to UMP and diphosphate. This chain is Uracil phosphoribosyltransferase 1, found in Schizosaccharomyces pombe (strain 972 / ATCC 24843) (Fission yeast).